Consider the following 326-residue polypeptide: tRNA-cytidine(32) 2-sulfurtransferase (326 aa).

The PP-loop motif signature appears at 63 to 68; sequence SGGKDS. Residues cysteine 138, cysteine 141, and cysteine 229 each coordinate [4Fe-4S] cluster.

The protein belongs to the TtcA family. Homodimer. Mg(2+) is required as a cofactor. It depends on [4Fe-4S] cluster as a cofactor.

It is found in the cytoplasm. It catalyses the reaction cytidine(32) in tRNA + S-sulfanyl-L-cysteinyl-[cysteine desulfurase] + AH2 + ATP = 2-thiocytidine(32) in tRNA + L-cysteinyl-[cysteine desulfurase] + A + AMP + diphosphate + H(+). The protein operates within tRNA modification. In terms of biological role, catalyzes the ATP-dependent 2-thiolation of cytidine in position 32 of tRNA, to form 2-thiocytidine (s(2)C32). The sulfur atoms are provided by the cysteine/cysteine desulfurase (IscS) system. The protein is tRNA-cytidine(32) 2-sulfurtransferase of Leptothrix cholodnii (strain ATCC 51168 / LMG 8142 / SP-6) (Leptothrix discophora (strain SP-6)).